A 212-amino-acid polypeptide reads, in one-letter code: Pyridoxine/pyridoxamine 5'-phosphate oxidase (212 aa).

Substrate is bound by residues 8–11 and Lys-66; that span reads RREY. Residues 61-66, 76-77, Arg-82, Lys-83, and Gln-105 each bind FMN; these read RIVLLK and FT. Residues Tyr-123, Arg-127, and Ser-131 each coordinate substrate. Residues 140-141 and Trp-185 contribute to the FMN site; that span reads QS. A substrate-binding site is contributed by 191–193; the sequence is RLH. Residue Arg-195 participates in FMN binding.

Belongs to the pyridoxamine 5'-phosphate oxidase family. In terms of assembly, homodimer. FMN serves as cofactor.

The enzyme catalyses pyridoxamine 5'-phosphate + O2 + H2O = pyridoxal 5'-phosphate + H2O2 + NH4(+). It catalyses the reaction pyridoxine 5'-phosphate + O2 = pyridoxal 5'-phosphate + H2O2. It participates in cofactor metabolism; pyridoxal 5'-phosphate salvage; pyridoxal 5'-phosphate from pyridoxamine 5'-phosphate: step 1/1. It functions in the pathway cofactor metabolism; pyridoxal 5'-phosphate salvage; pyridoxal 5'-phosphate from pyridoxine 5'-phosphate: step 1/1. In terms of biological role, catalyzes the oxidation of either pyridoxine 5'-phosphate (PNP) or pyridoxamine 5'-phosphate (PMP) into pyridoxal 5'-phosphate (PLP). The protein is Pyridoxine/pyridoxamine 5'-phosphate oxidase of Shewanella pealeana (strain ATCC 700345 / ANG-SQ1).